Here is a 609-residue protein sequence, read N- to C-terminus: QWRF motif-containing protein 4 (609 aa).

Disordered stretches follow at residues 1–227 (MQVG…IRGN) and 271–369 (EVSS…TAQS). 2 stretches are compositionally biased toward polar residues: residues 11–21 (GKQQQSVSDAT) and 46–57 (EVSSRYRSPTPT). 2 stretches are compositionally biased toward low complexity: residues 98–110 (PVSD…PVSS) and 129–143 (SLSV…SVPV). Over residues 151 to 180 (VTSSTDRTLRPSSSNIAHKQQSETTSVTRK) the composition is skewed to polar residues. Composition is skewed to low complexity over residues 271 to 285 (EVSS…SSTE) and 302 to 332 (SAPG…PSRG). The short motif at 407–410 (QWRF) is the QWRF motif element. Positions 588–609 (EEEVRDDAESSPLLPLSKFQWP) are disordered.

The protein belongs to the QWRF family.

The sequence is that of QWRF motif-containing protein 4 (QWRF4) from Arabidopsis thaliana (Mouse-ear cress).